Consider the following 505-residue polypeptide: Deoxyguanosinetriphosphate triphosphohydrolase (505 aa).

An HD domain is found at 66–273; it reads RLTHSMEVQQ…MEAADDISYC (208 aa).

The protein belongs to the dGTPase family. Type 1 subfamily. In terms of assembly, homotetramer. The cofactor is Mg(2+).

It catalyses the reaction dGTP + H2O = 2'-deoxyguanosine + triphosphate + H(+). In terms of biological role, dGTPase preferentially hydrolyzes dGTP over the other canonical NTPs. This is Deoxyguanosinetriphosphate triphosphohydrolase from Shigella boydii serotype 18 (strain CDC 3083-94 / BS512).